The primary structure comprises 426 residues: UDP-N-acetylglucosamine 1-carboxyvinyltransferase 2 (426 aa).

Residue Lys-22–Asn-23 coordinates phosphoenolpyruvate. Residue Arg-92 participates in UDP-N-acetyl-alpha-D-glucosamine binding. The Proton donor role is filled by Asp-116. UDP-N-acetyl-alpha-D-glucosamine contacts are provided by residues Arg-121–Gln-125, Asp-307, and Ile-329.

Belongs to the EPSP synthase family. MurA subfamily.

It localises to the cytoplasm. It catalyses the reaction phosphoenolpyruvate + UDP-N-acetyl-alpha-D-glucosamine = UDP-N-acetyl-3-O-(1-carboxyvinyl)-alpha-D-glucosamine + phosphate. It participates in cell wall biogenesis; peptidoglycan biosynthesis. Its function is as follows. Cell wall formation. Adds enolpyruvyl to UDP-N-acetylglucosamine. This is UDP-N-acetylglucosamine 1-carboxyvinyltransferase 2 from Lactiplantibacillus plantarum (strain ATCC BAA-793 / NCIMB 8826 / WCFS1) (Lactobacillus plantarum).